We begin with the raw amino-acid sequence, 131 residues long: Small ribosomal subunit protein uS8 (131 aa).

The protein belongs to the universal ribosomal protein uS8 family. As to quaternary structure, part of the 30S ribosomal subunit. Contacts proteins S5 and S12.

Functionally, one of the primary rRNA binding proteins, it binds directly to 16S rRNA central domain where it helps coordinate assembly of the platform of the 30S subunit. This chain is Small ribosomal subunit protein uS8, found in Wolbachia sp. subsp. Brugia malayi (strain TRS).